The following is an 845-amino-acid chain: Meiotically up-regulated gene 4 protein (845 aa).

The segment at 122-158 (LSTTDEQPKEPSIISISSSSSDPSSSPPPSSSLLKTP) is disordered. Over residues 132-145 (PSIISISSSSSDPS) the composition is skewed to low complexity. Residues 726-746 (FLVFLTFTGMTLFILYQLTFP) traverse the membrane as a helical segment.

It is found in the membrane. Its function is as follows. Has a role in meiosis. In Schizosaccharomyces pombe (strain 972 / ATCC 24843) (Fission yeast), this protein is Meiotically up-regulated gene 4 protein (mug4).